Here is a 906-residue protein sequence, read N- to C-terminus: Protein translocase subunit SecA (906 aa).

ATP contacts are provided by residues Gln-89, 107–111 (GEGKT), and Asp-502. Residues 868-887 (VPPAQRDPADPRTWGKVSRN) form a disordered region. Cys-890, Cys-892, Cys-901, and His-902 together coordinate Zn(2+).

It belongs to the SecA family. Monomer and homodimer. Part of the essential Sec protein translocation apparatus which comprises SecA, SecYEG and auxiliary proteins SecDF-YajC and YidC. Zn(2+) is required as a cofactor.

The protein resides in the cell inner membrane. It localises to the cytoplasm. It catalyses the reaction ATP + H2O + cellular proteinSide 1 = ADP + phosphate + cellular proteinSide 2.. Its function is as follows. Part of the Sec protein translocase complex. Interacts with the SecYEG preprotein conducting channel. Has a central role in coupling the hydrolysis of ATP to the transfer of proteins into and across the cell membrane, serving both as a receptor for the preprotein-SecB complex and as an ATP-driven molecular motor driving the stepwise translocation of polypeptide chains across the membrane. The polypeptide is Protein translocase subunit SecA (Brucella abortus (strain S19)).